The following is a 425-amino-acid chain: Serine--tRNA ligase (425 aa).

Residue 227-229 (TAE) participates in L-serine binding. ATP contacts are provided by residues 258–260 (RRE) and valine 274. Glutamate 281 serves as a coordination point for L-serine. 347 to 350 (ETHS) lines the ATP pocket. Threonine 382 provides a ligand contact to L-serine.

The protein belongs to the class-II aminoacyl-tRNA synthetase family. Type-1 seryl-tRNA synthetase subfamily. As to quaternary structure, homodimer. The tRNA molecule binds across the dimer.

The protein resides in the cytoplasm. The enzyme catalyses tRNA(Ser) + L-serine + ATP = L-seryl-tRNA(Ser) + AMP + diphosphate + H(+). It carries out the reaction tRNA(Sec) + L-serine + ATP = L-seryl-tRNA(Sec) + AMP + diphosphate + H(+). It participates in aminoacyl-tRNA biosynthesis; selenocysteinyl-tRNA(Sec) biosynthesis; L-seryl-tRNA(Sec) from L-serine and tRNA(Sec): step 1/1. Its function is as follows. Catalyzes the attachment of serine to tRNA(Ser). Is also able to aminoacylate tRNA(Sec) with serine, to form the misacylated tRNA L-seryl-tRNA(Sec), which will be further converted into selenocysteinyl-tRNA(Sec). This chain is Serine--tRNA ligase, found in Deinococcus radiodurans (strain ATCC 13939 / DSM 20539 / JCM 16871 / CCUG 27074 / LMG 4051 / NBRC 15346 / NCIMB 9279 / VKM B-1422 / R1).